The sequence spans 255 residues: Protein SCO2 homolog, mitochondrial (255 aa).

Residues 1 to 41 (MLLALGPKAWPKLSQFKPLLRISGGETLHRNSRHWAGQGQR) constitute a mitochondrion transit peptide. At 42–49 (QGPGLRTR) the chain is on the mitochondrial matrix side. A helical transmembrane segment spans residues 50 to 67 (LLITALFGAGLGWAWLAA). Topologically, residues 68-255 (RAEKEQWRQQ…HIAAFHSVLP (188 aa)) are mitochondrial intermembrane. The region spanning 74 to 248 (WRQQQRTEAL…IVESIRRHIA (175 aa)) is the Thioredoxin domain. 3 residues coordinate Cu cation: Cys122, Cys126, and His213. Cys122 and Cys126 form a disulfide bridge.

It belongs to the SCO1/2 family. As to quaternary structure, homodimer. Interacts with COA6. Found in a complex with TMEM177, COX20, COA6, MT-CO2/COX2, COX18 and SCO1. Interacts with TMEM177 in a COX20-dependent manner. Interacts with COX20 in a MT-CO2/COX2- and COX18-dependent manner. Interacts with COX16. As to expression, expressed in retina, retinal pigment epithelium, and sclera.

The protein resides in the mitochondrion inner membrane. In terms of biological role, copper metallochaperone essential for the synthesis and maturation of cytochrome c oxidase subunit II (MT-CO2/COX2) by facilitating the incorporation of copper into the Cu(A) site of MT-CO2/COX2. Could also act as a thiol-disulfide oxidoreductase to regulate the redox state of the cysteines in SCO1 during maturation of MT-CO2/COX2. In Mus musculus (Mouse), this protein is Protein SCO2 homolog, mitochondrial (Sco2).